The chain runs to 399 residues: Phosphoglycerate kinase (399 aa).

Substrate-binding positions include D22–N24, R38, H61–R64, R120, and R153. ATP is bound by residues K204, E326, and G352 to T355.

The protein belongs to the phosphoglycerate kinase family. As to quaternary structure, monomer.

The protein resides in the cytoplasm. It catalyses the reaction (2R)-3-phosphoglycerate + ATP = (2R)-3-phospho-glyceroyl phosphate + ADP. It participates in carbohydrate degradation; glycolysis; pyruvate from D-glyceraldehyde 3-phosphate: step 2/5. The protein is Phosphoglycerate kinase of Citrifermentans bemidjiense (strain ATCC BAA-1014 / DSM 16622 / JCM 12645 / Bem) (Geobacter bemidjiensis).